Reading from the N-terminus, the 267-residue chain is Glucosamine-6-phosphate deaminase (267 aa).

The active-site Proton acceptor; for enolization step is the D71. D140 (for ring-opening step) is an active-site residue. Residue H142 is the Proton acceptor; for ring-opening step of the active site. The active-site For ring-opening step is E147.

This sequence belongs to the glucosamine/galactosamine-6-phosphate isomerase family. As to quaternary structure, homohexamer.

Its subcellular location is the cytoplasm. The catalysed reaction is alpha-D-glucosamine 6-phosphate + H2O = beta-D-fructose 6-phosphate + NH4(+). The protein operates within nucleotide-sugar biosynthesis; UDP-N-acetyl-alpha-D-glucosamine biosynthesis; alpha-D-glucosamine 6-phosphate from D-fructose 6-phosphate: step 1/1. Catalyzes the reversible conversion of alpha-D-glucosamine 6-phosphate (GlcN-6P) into beta-D-fructose 6-phosphate (Fru-6P) and ammonium ion, a regulatory reaction step in de novo uridine diphosphate-N-acetyl-alpha-D-glucosamine (UDP-GlcNAc) biosynthesis via hexosamine pathway. The chain is Glucosamine-6-phosphate deaminase from Caenorhabditis elegans.